The chain runs to 550 residues: MAAPASSHGPSEDSGCLQERKIAAEMMLVDCLTDDQELVSFEDVIVDFTQEEWSSLNPDQRNLYRDVMLENYQNLATVGYQLIKPSLISWLEQEEFSKGQKIVFPEWKLQLETKCSAFQQEFLRGNISSRMQMQTGINRGRELCDGTQYGDFFSELSPLRTDMKTQPAQDNYGCSQYRKDFLMLQRKNCAGEKLSEFSQSEETGMTPVKEKIDTQEKGFECSDCGKSFMSQSHLQTHQRTHSGDKLYEWNECGRSFINSRLAVLIETLNAKKPHRCKECGKGYRYPAYLNIHMRTHTGEKPYECKECGKAFNYSNSFQIHGRTHTGEKPYVCSQCGKAFTQHSGLSIHVRSHTGDKPYGCKECGKAFLTSSRLIQHIRTHTGEKPFVCVKCGKAFAISSNLNGHLKLHAEEKTCECKICGKAFGYLSCLNNHMRTHNAKKSYTCKECGKAFNYSTHLKIHMRIHTGEKPYECKQCGKAFSHSTSFQIHERTHTGEKPYECKECGKAFICPSSFRIHEISHTHTEEKPYKCQQCGKAYSHPRSLRRHERIH.

The KRAB domain maps to 39-110; it reads VSFEDVIVDF…KIVFPEWKLQ (72 aa). C2H2-type zinc fingers lie at residues 219–241, 274–296, 302–324, 330–352, 358–380, 386–408, 414–436, 442–464, 470–492, 498–522, and 528–550; these read FECS…QRTH, HRCK…MRTH, YECK…GRTH, YVCS…VRSH, YGCK…IRTH, FVCV…LKLH, CECK…MRTH, YTCK…MRIH, YECK…ERTH, YECK…SHTH, and YKCQ…ERIH.

The protein resides in the nucleus. Functionally, may be involved in transcriptional regulation. The chain is Zinc finger protein 426 (Znf426) from Mus musculus (Mouse).